The chain runs to 337 residues: Putative [LysW]-lysine/[LysW]-ornithine hydrolase (337 aa).

Zn(2+) is bound at residue H67. Residue D69 is part of the active site. D91 contributes to the Zn(2+) binding site. E118 (proton acceptor) is an active-site residue. The Zn(2+) site is built by E119, E140, and H298.

It belongs to the peptidase M20A family. LysK subfamily. The cofactor is Zn(2+). It depends on Co(2+) as a cofactor.

The protein resides in the cytoplasm. The enzyme catalyses [amino-group carrier protein]-C-terminal-gamma-(L-lysyl)-L-glutamate + H2O = [amino-group carrier protein]-C-terminal-L-glutamate + L-lysine. It catalyses the reaction [amino-group carrier protein]-C-terminal-gamma-(L-ornithyl)-L-glutamate + H2O = [amino-group carrier protein]-C-terminal-L-glutamate + L-ornithine. It functions in the pathway amino-acid biosynthesis; L-lysine biosynthesis via AAA pathway; L-lysine from L-alpha-aminoadipate (Thermus route): step 5/5. It participates in amino-acid biosynthesis; L-arginine biosynthesis. In terms of biological role, catalyzes the release of L-lysine from [LysW]-gamma-L-lysine and the release of L-ornithine from [LysW]-L-ornithine. This chain is Putative [LysW]-lysine/[LysW]-ornithine hydrolase, found in Pyrococcus abyssi (strain GE5 / Orsay).